Reading from the N-terminus, the 356-residue chain is Protein translocase subunit SecY (356 aa).

The next 8 membrane-spanning stretches (helical) occupy residues 24–44 (LFVIGALIVFRIGSFIPIPGI), 77–97 (IFALGIMPYISASIIIQLLTV), 125–145 (LVLAIFQSIGIATGLPNMPGM), 154–174 (FAFYFTAVVSLVTGTMFLMWL), 183–203 (IGNGISIIIFAGIVAGLPPAV), 217–237 (FLLLLLVAVLVFAVTFFVVFI), 274–294 (VIPAIFASSIILFPATIASWF), and 317–337 (YVLLYASAIIFFCFFYTALVF).

Belongs to the SecY/SEC61-alpha family. As to quaternary structure, component of the Sec protein translocase complex. Heterotrimer consisting of SecY, SecE and SecG subunits. The heterotrimers can form oligomers, although 1 heterotrimer is thought to be able to translocate proteins. Interacts with the ribosome. Interacts with SecDF, and other proteins may be involved. Interacts with SecA.

The protein resides in the cell membrane. Functionally, the central subunit of the protein translocation channel SecYEG. Consists of two halves formed by TMs 1-5 and 6-10. These two domains form a lateral gate at the front which open onto the bilayer between TMs 2 and 7, and are clamped together by SecE at the back. The channel is closed by both a pore ring composed of hydrophobic SecY resides and a short helix (helix 2A) on the extracellular side of the membrane which forms a plug. The plug probably moves laterally to allow the channel to open. The ring and the pore may move independently. The sequence is that of Protein translocase subunit SecY from Buchnera aphidicola subsp. Acyrthosiphon kondoi (Acyrthosiphon kondoi symbiotic bacterium).